A 215-amino-acid chain; its full sequence is Histidine biosynthesis bifunctional protein HisIE (215 aa).

Positions 1–118 (MTKSISIEHL…YKNDVALLQI (118 aa)) are phosphoribosyl-AMP cyclohydrolase. The interval 119–215 (IPQVSAKIKE…HVEKEGQQRE (97 aa)) is phosphoribosyl-ATP pyrophosphohydrolase.

The protein in the N-terminal section; belongs to the PRA-CH family. This sequence in the C-terminal section; belongs to the PRA-PH family.

The protein resides in the cytoplasm. The enzyme catalyses 1-(5-phospho-beta-D-ribosyl)-ATP + H2O = 1-(5-phospho-beta-D-ribosyl)-5'-AMP + diphosphate + H(+). The catalysed reaction is 1-(5-phospho-beta-D-ribosyl)-5'-AMP + H2O = 1-(5-phospho-beta-D-ribosyl)-5-[(5-phospho-beta-D-ribosylamino)methylideneamino]imidazole-4-carboxamide. It functions in the pathway amino-acid biosynthesis; L-histidine biosynthesis; L-histidine from 5-phospho-alpha-D-ribose 1-diphosphate: step 2/9. Its pathway is amino-acid biosynthesis; L-histidine biosynthesis; L-histidine from 5-phospho-alpha-D-ribose 1-diphosphate: step 3/9. The polypeptide is Histidine biosynthesis bifunctional protein HisIE (Oceanobacillus iheyensis (strain DSM 14371 / CIP 107618 / JCM 11309 / KCTC 3954 / HTE831)).